The chain runs to 110 residues: Large ribosomal subunit protein uL22 (110 aa).

Belongs to the universal ribosomal protein uL22 family. As to quaternary structure, part of the 50S ribosomal subunit.

Functionally, this protein binds specifically to 23S rRNA; its binding is stimulated by other ribosomal proteins, e.g. L4, L17, and L20. It is important during the early stages of 50S assembly. It makes multiple contacts with different domains of the 23S rRNA in the assembled 50S subunit and ribosome. In terms of biological role, the globular domain of the protein is located near the polypeptide exit tunnel on the outside of the subunit, while an extended beta-hairpin is found that lines the wall of the exit tunnel in the center of the 70S ribosome. The polypeptide is Large ribosomal subunit protein uL22 (Exiguobacterium sp. (strain ATCC BAA-1283 / AT1b)).